A 529-amino-acid chain; its full sequence is Phospholipase A1-Igamma2, chloroplastic (529 aa).

Residues 1 to 43 (MAAIPSHNNLLTINHKNSITGSSSLNTNFSEINFPAKFRVATR) constitute a chloroplast transit peptide. The short motif at 316–320 (GHSLG) is the GXSXG element. Ser-318 functions as the Acyl-ester intermediate in the catalytic mechanism. Residues Asp-381 and His-437 each act as charge relay system in the active site.

Belongs to the AB hydrolase superfamily. Lipase family. As to quaternary structure, interacts with SBP1. Widely expressed. Highly expressed in leaves and stems.

It localises to the plastid. Its subcellular location is the chloroplast. It carries out the reaction 1,2-dihexadecanoyl-sn-glycero-3-phosphocholine + H2O = 2-hexadecanoyl-sn-glycero-3-phosphocholine + hexadecanoate + H(+). The enzyme catalyses a 1,2-diacyl-3-O-(beta-D-galactosyl)-sn-glycerol + H2O = an acyl-3-O-(beta-D-galactosyl)-sn-glycerol + a fatty acid + H(+). The catalysed reaction is a 1,2-diacyl-3-O-[alpha-D-galactosyl-(1-&gt;6)-beta-D-galactosyl]-sn-glycerol + H2O = acyl-3-O-[alpha-D-galactosyl-(1-&gt;6)-beta-D-galactosyl]-sn-glycerol + a fatty acid + H(+). It catalyses the reaction a triacylglycerol + H2O = a diacylglycerol + a fatty acid + H(+). In terms of biological role, acylhydrolase with broad specificity. Catalyzes the hydrolysis of phosphatidylcholine at the sn-1 position. Possesses moderate activity toward phosphatidylcholine (PC), monogalactosyldiacylglycerol (MGDG), digalactosyldiacylglycerol (DGDG) and triacylglycerol (TAG). In Arabidopsis thaliana (Mouse-ear cress), this protein is Phospholipase A1-Igamma2, chloroplastic.